Here is a 1097-residue protein sequence, read N- to C-terminus: RecBCD enzyme subunit RecC (1097 aa).

The protein belongs to the RecC family. As to quaternary structure, heterotrimer of RecB, RecC and RecD. All subunits contribute to DNA-binding.

Its function is as follows. A helicase/nuclease that prepares dsDNA breaks (DSB) for recombinational DNA repair. Binds to DSBs and unwinds DNA via a highly rapid and processive ATP-dependent bidirectional helicase activity. Holoenzyme degrades any linearized DNA that is unable to undergo homologous recombination. In the holoenzyme this subunit recognizes the wild-type Chi sequence, and when added to isolated RecB increases its ATP-dependent helicase processivity. Unlike the case in E.coli, suppresses RecA-dependent homologous recombination, is instead required for single-strand annealing pathway repair of DSB. This is RecBCD enzyme subunit RecC from Mycobacterium tuberculosis (strain CDC 1551 / Oshkosh).